We begin with the raw amino-acid sequence, 309 residues long: Taste receptor type 2 member 20 (309 aa).

The Extracellular segment spans residues 1–6 (MMSFLH). A helical transmembrane segment spans residues 7 to 27 (IVFSILVVVAFILGNFANGFI). Topologically, residues 28–46 (ALINFIAWVKRQKISSADQ) are cytoplasmic. The chain crosses the membrane as a helical span at residues 47 to 67 (IIAALAVSRVGLLWVILLHWY). Over 68–79 (STVLNPTSSNLK) the chain is Extracellular. The chain crosses the membrane as a helical span at residues 80–100 (VIIFISNAWAVTNHFSIWLAT). At 101 to 125 (SLSIFYLLKIVNFSRLIFHHLKRKA) the chain is on the cytoplasmic side. A helical transmembrane segment spans residues 126–146 (KSVVLVIVLGSLFFLVCXLVM). Topologically, residues 147–178 (KNTYINVWTEECEGNVTWKIKLRNAMHLSNLT) are extracellular. A helical membrane pass occupies residues 179–199 (VAMLANLIPFTLTLISFLLLI). At 200-229 (YSLCKHLKKMQLHGKGSQDPSTKIHIKALQ) the chain is on the cytoplasmic side. Residues 230–250 (TVTSFLILLAIYFLCLITSFW) form a helical membrane-spanning segment. Residues 251–259 (NSKMRPKEI) lie on the Extracellular side of the membrane. Residues 260 to 280 (VLMLCQAFGIIYPSFHSFILI) traverse the membrane as a helical segment. Residues 281-309 (WGNKTLKQTFLSVLWQVTCWAKGQNQSTP) are Cytoplasmic-facing.

The protein belongs to the G-protein coupled receptor T2R family.

The protein resides in the membrane. Its function is as follows. Receptor that may play a role in the perception of bitterness and is gustducin-linked. May play a role in sensing the chemical composition of the gastrointestinal content. The activity of this receptor may stimulate alpha gustducin, mediate PLC-beta-2 activation and lead to the gating of TRPM5. The chain is Taste receptor type 2 member 20 (TAS2R20) from Pan troglodytes (Chimpanzee).